Here is a 269-residue protein sequence, read N- to C-terminus: uncharacterized protein (269 aa).

Helical transmembrane passes span 65–85 (FSLF…LFVM), 156–176 (VTSV…ISMV), 182–202 (YTRI…WLGF), 206–226 (MMSF…NDFW), and 242–262 (TLSA…EFSF). A Di-lysine motif motif is present at residues 266-269 (KKKW).

This sequence belongs to the SURF4 family.

The protein resides in the membrane. This is an uncharacterized protein from Caenorhabditis elegans.